The sequence spans 310 residues: UPF0761 membrane protein VF_0100 (310 aa).

A run of 6 helical transmembrane segments spans residues 34-54 (YMAY…LSVL), 97-117 (MTAV…SSID), 136-156 (FSLY…SLAA), 178-198 (LLGW…YLLV), 207-227 (HALI…VGFA), and 242-262 (ALAA…IVLI).

It belongs to the UPF0761 family.

The protein localises to the cell inner membrane. In Aliivibrio fischeri (strain ATCC 700601 / ES114) (Vibrio fischeri), this protein is UPF0761 membrane protein VF_0100.